A 496-amino-acid polypeptide reads, in one-letter code: Squalene epoxidase ERG1 (496 aa).

Over 1–16 (MSAVNVAPELINADNT) the chain is Cytoplasmic. A helical membrane pass occupies residues 17–37 (ITYDAIVIGAGVIGPCVATGL). Residues 28-29 (VI), 48-49 (ER), Arg-56, and Arg-158 contribute to the FAD site. The Lumenal segment spans residues 38–474 (ARKGKKVLIV…FLGLPMALLE (437 aa)). Residues Lys-284, Lys-289, and Lys-311 each participate in a glycyl lysine isopeptide (Lys-Gly) (interchain with G-Cter in ubiquitin) cross-link. Positions 335 and 348 each coordinate FAD. A helical transmembrane segment spans residues 475 to 495 (GIMILITAIRVFTPFLFGELI). A topological domain (cytoplasmic) is located at residue Gly-496.

The protein belongs to the squalene monooxygenase family. Interacts with ERG28. FAD is required as a cofactor.

It is found in the microsome membrane. It localises to the endoplasmic reticulum membrane. Its subcellular location is the lipid droplet. The enzyme catalyses squalene + reduced [NADPH--hemoprotein reductase] + O2 = (S)-2,3-epoxysqualene + oxidized [NADPH--hemoprotein reductase] + H2O + H(+). It functions in the pathway terpene metabolism; lanosterol biosynthesis; lanosterol from farnesyl diphosphate: step 2/3. Its activity is regulated as follows. Inhibited by the allylamine antimycotic drugs. In terms of biological role, squalene epoxidase; part of the third module of ergosterol biosynthesis pathway that includes the late steps of the pathway. ERG1 catalyzes the epoxidation of squalene into 2,3-epoxysqualene. The third module or late pathway involves the ergosterol synthesis itself through consecutive reactions that mainly occur in the endoplasmic reticulum (ER) membrane. Firstly, the squalene synthase ERG9 catalyzes the condensation of 2 farnesyl pyrophosphate moieties to form squalene, which is the precursor of all steroids. Squalene synthase is crucial for balancing the incorporation of farnesyl diphosphate (FPP) into sterol and nonsterol isoprene synthesis. Secondly, the squalene epoxidase ERG1 catalyzes the stereospecific oxidation of squalene to (S)-2,3-epoxysqualene, which is considered to be a rate-limiting enzyme in steroid biosynthesis. Then, the lanosterol synthase ERG7 catalyzes the cyclization of (S)-2,3 oxidosqualene to lanosterol, a reaction that forms the sterol core. In the next steps, lanosterol is transformed to zymosterol through a complex process involving various demethylation, reduction and desaturation reactions. The lanosterol 14-alpha-demethylase ERG11 (also known as CYP51) catalyzes C14-demethylation of lanosterol to produce 4,4'-dimethyl cholesta-8,14,24-triene-3-beta-ol, which is critical for ergosterol biosynthesis. The C-14 reductase ERG24 reduces the C14=C15 double bond of 4,4-dimethyl-cholesta-8,14,24-trienol to produce 4,4-dimethyl-cholesta-8,24-dienol. 4,4-dimethyl-cholesta-8,24-dienol is substrate of the C-4 demethylation complex ERG25-ERG26-ERG27 in which ERG25 catalyzes the three-step monooxygenation required for the demethylation of 4,4-dimethyl and 4alpha-methylsterols, ERG26 catalyzes the oxidative decarboxylation that results in a reduction of the 3-beta-hydroxy group at the C-3 carbon to an oxo group, and ERG27 is responsible for the reduction of the keto group on the C-3. ERG28 has a role as a scaffold to help anchor ERG25, ERG26 and ERG27 to the endoplasmic reticulum and ERG29 regulates the activity of the iron-containing C4-methylsterol oxidase ERG25. Then, the sterol 24-C-methyltransferase ERG6 catalyzes the methyl transfer from S-adenosyl-methionine to the C-24 of zymosterol to form fecosterol. The C-8 sterol isomerase ERG2 catalyzes the reaction which results in unsaturation at C-7 in the B ring of sterols and thus converts fecosterol to episterol. The sterol-C5-desaturase ERG3 then catalyzes the introduction of a C-5 double bond in the B ring to produce 5-dehydroepisterol. The C-22 sterol desaturase ERG5 further converts 5-dehydroepisterol into ergosta-5,7,22,24(28)-tetraen-3beta-ol by forming the C-22(23) double bond in the sterol side chain. Finally, ergosta-5,7,22,24(28)-tetraen-3beta-ol is substrate of the C-24(28) sterol reductase ERG4 to produce ergosterol. This is Squalene epoxidase ERG1 from Saccharomyces cerevisiae (strain ATCC 204508 / S288c) (Baker's yeast).